A 145-amino-acid chain; its full sequence is Synaptojanin-2-binding protein (145 aa).

At 1–117 the chain is on the cytoplasmic side; sequence MNGRVDYLVS…VHRGDGEPSG (117 aa). Residues 13–100 form the PDZ domain; it reads EINLTRGPSG…AVSLRVQHRL (88 aa). The chain crosses the membrane as a helical span at residues 118 to 138; that stretch reads VPVAVVLLPVFALTLVAVWAF. Residues 139–145 lie on the Mitochondrial intermembrane side of the membrane; sequence VRYRKQL.

Binds (via the PDZ domain) to isoform 2A of SYNJ2 (via the unique motif in the C-terminus). Interacts (via C-terminus) with RALBP1. Interacts (via PDZ domain) with ACVR2A (via C-terminus) and ACVR2B (via C-terminus). Forms a ternary complex with ACVR2A and RALBP1. Interacts with MAPK12. Interacts with DLL1; enhances DLL1 protein stability, and promotes notch signaling in endothelial cells. As to expression, widely expressed.

The protein localises to the mitochondrion outer membrane. Functionally, regulates endocytosis of activin type 2 receptor kinases through the Ral/RALBP1-dependent pathway and may be involved in suppression of activin-induced signal transduction. The chain is Synaptojanin-2-binding protein (Synj2bp) from Rattus norvegicus (Rat).